Here is a 359-residue protein sequence, read N- to C-terminus: Type-1 angiotensin II receptor (359 aa).

Topologically, residues 1–25 (MILNSSTEDGIKRIQDDCPKAGRHN) are extracellular. Residue Asn4 is glycosylated (N-linked (GlcNAc...) (complex) asparagine). Gln15 and Asp17 together coordinate angiotensin II. 2 disulfide bridges follow: Cys18–Cys274 and Cys101–Cys180. A helical transmembrane segment spans residues 26-55 (YIFVMIPTLYSIIFVVGIFGNSLVVIVIYF). At 56 to 61 (YMKLKT) the chain is on the cytoplasmic side. Residues 62-89 (VASVFLLNLALADLCFLLTLPLWAVYTA) traverse the membrane as a helical segment. Over 90–98 (MEYRWPFGN) the chain is Extracellular. The helical transmembrane segment at 99 to 125 (YLCKIASASVSFNLYASVFLLTCLSID) threads the bilayer. At 126 to 141 (RYLAIVHPMKSRLRRT) the chain is on the cytoplasmic side. The helical transmembrane segment at 142 to 165 (MLVAKVTCIIIWLLAGLASLPAII) threads the bilayer. Over 166–190 (HRNVFFIENTNITVCAFHYESQNST) the chain is Extracellular. Residue Arg167 participates in angiotensin II binding. Residue Asn176 is glycosylated (N-linked (GlcNAc...) asparagine). Angiotensin II is bound by residues Phe182, His183, and Tyr184. A glycan (N-linked (GlcNAc...) asparagine) is linked at Asn188. Residues 191-216 (LPIGLGLTKNILGFLFPFLIILTSYT) form a helical membrane-spanning segment. Residue Lys199 coordinates angiotensin II. Residues 217 to 239 (LIWKALKKAYEIQKNKPRNDDIF) lie on the Cytoplasmic side of the membrane. A helical transmembrane segment spans residues 240–268 (KIIMAIVLFFFFSWIPHQIFTFLDVLIQL). Residues 269–278 (GIIRDCRIAD) lie on the Extracellular side of the membrane. The helical transmembrane segment at 279 to 304 (IVDTAMPITICIAYFNNCLNPLFYGF) threads the bilayer. Residues 305 to 359 (LGKKFKRYFLQLLKYIPPKAKSHSNLSTKMSTLSYRPSDNVSSSTKKPAPCFEVE) are Cytoplasmic-facing. Residues 335–350 (STLSYRPSDNVSSSTK) show a composition bias toward polar residues. The interval 335-359 (STLSYRPSDNVSSSTKKPAPCFEVE) is disordered. Cys355 carries the S-palmitoyl cysteine lipid modification.

The protein belongs to the G-protein coupled receptor 1 family. Interacts with MAS1. Interacts with ARRB1. Interacts with FLNA (via filamin repeat 21); increases PKA-mediated phosphorylation of FLNA. In terms of processing, C-terminal Ser or Thr residues may be phosphorylated. As to expression, liver, lung, adrenal and adrenocortical adenomas.

The protein resides in the cell membrane. Its activity is regulated as follows. Strongly inhibited by anti-hypertensive drugs losartan, candesartan, valsartan, irbesartan, telmisartan, eprosartan, olmesartan and azilsartan, most of which share a common biphenyl-tetrazole scaffold. Functionally, receptor for angiotensin II, a vasoconstricting peptide, which acts as a key regulator of blood pressure and sodium retention by the kidney. The activated receptor in turn couples to G-alpha proteins G(q) (GNAQ, GNA11, GNA14 or GNA15) and thus activates phospholipase C and increases the cytosolic Ca(2+) concentrations, which in turn triggers cellular responses such as stimulation of protein kinase C. In terms of biological role, (Microbial infection) During SARS coronavirus-2/SARS-CoV-2 infection, it is able to recognize and internalize the complex formed by secreted ACE2 and SARS-CoV-2 spike protein through DNM2/dynamin 2-dependent endocytosis. The polypeptide is Type-1 angiotensin II receptor (Homo sapiens (Human)).